We begin with the raw amino-acid sequence, 1067 residues long: Tricorn protease homolog 1 (1067 aa).

Residues 518 to 551 (TTPSPFGPQRHGRPFETPDREETPDSEGTPTTRI) form a disordered region. Over residues 530–540 (RPFETPDREET) the composition is skewed to basic and acidic residues. Residue H740 is the Charge relay system of the active site. Positions 754–851 (RQGLLGADLS…HAVVVPLADE (98 aa)) are PDZ-like. Substrate is bound at residue G914. Residue S961 is the Nucleophile of the active site. Residue E1019 is the Charge relay system of the active site.

Belongs to the peptidase S41B family. As to quaternary structure, forms a homohexameric complex; it is not known if it assembles into higher-order structures.

It is found in the cytoplasm. Its activity is regulated as follows. Stimulated by MgCl2. Its function is as follows. Degrades oligopeptides in a sequential manner. This chain is Tricorn protease homolog 1 (tri1), found in Streptomyces coelicolor (strain ATCC BAA-471 / A3(2) / M145).